Consider the following 503-residue polypeptide: Anthranilate synthase component 1 3 (503 aa).

269–271 (PYS) contacts L-tryptophan. Residue 304–305 (GT) participates in chorismate binding. A Mg(2+)-binding site is contributed by glutamate 331. Chorismate is bound by residues tyrosine 419, arginine 439, 453-455 (GSG), and glycine 455. Glutamate 468 serves as a coordination point for Mg(2+).

This sequence belongs to the anthranilate synthase component I family. Tetramer of two components I and two components II. The cofactor is Mg(2+).

The enzyme catalyses chorismate + L-glutamine = anthranilate + pyruvate + L-glutamate + H(+). It functions in the pathway amino-acid biosynthesis; L-tryptophan biosynthesis; L-tryptophan from chorismate: step 1/5. This Haloarcula marismortui (strain ATCC 43049 / DSM 3752 / JCM 8966 / VKM B-1809) (Halobacterium marismortui) protein is Anthranilate synthase component 1 3 (trpE3).